A 1057-amino-acid chain; its full sequence is Protein transport protein Sec16B (1057 aa).

Positions 1-15 (MELWVPQTQGRTTGP) are enriched in polar residues. The interval 1-86 (MELWVPQTQG…VSGADYLKGS (86 aa)) is disordered. Basic and acidic residues predominate over residues 45-63 (QDTHKNSKPQQDPRDDHQQ). Phosphoserine occurs at positions 70, 137, 161, and 185. The interval 185 to 220 (SAFGLEQPGEFFPESGAQKQKPSLTSKSNLLQQHES) is disordered. Positions 201-213 (AQKQKPSLTSKSN) are enriched in polar residues. The residue at position 245 (serine 245) is a Phosphoserine. The interval 263 to 708 (APMRFYVPHV…KHKELEQTRT (446 aa)) is central conserved domain (CCD); required for localization to endoplasmic reticulum exit sites. Basic and acidic residues predominate over residues 704–715 (EQTRTGDLRDPD). Disordered stretches follow at residues 704 to 778 (EQTR…TYSE) and 849 to 1057 (AVIS…SQPC). Over residues 737 to 764 (GQQNYSEDSEYSSALWPTSEQTSLTNPT) the composition is skewed to polar residues. At threonine 856 the chain carries Phosphothreonine. Phosphoserine occurs at positions 866, 869, 872, and 881. A compositionally biased stretch (basic and acidic residues) spans 883-903 (GADKPPHPDASQKEKLRDGKN). Residues 906-926 (SSGFGWFSWFRSKPASSVSTS) are compositionally biased toward low complexity. Residues 927–938 (GDEDSVDSSDSE) show a composition bias toward acidic residues. Gly residues predominate over residues 990–999 (EGVGIGGFSG). The span at 1028 to 1043 (NPSQVPQLPTASSLNR) shows a compositional bias: polar residues.

It belongs to the SEC16 family. In terms of assembly, SEC16A and SEC16B are each present in multiple copies in a heteromeric complex. Interacts with TFG. Interacts with SEC13. Liver, kidney, heart, spleen and brain.

Its subcellular location is the endoplasmic reticulum membrane. It localises to the golgi apparatus membrane. Functionally, plays a role in the organization of the endoplasmic reticulum exit sites (ERES), also known as transitional endoplasmic reticulum (tER). Required for secretory cargo traffic from the endoplasmic reticulum to the Golgi apparatus. Involved in peroxisome biogenesis. Regulates the transport of peroxisomal biogenesis factors PEX3 and PEX16 from the ER to peroxisomes. This is Protein transport protein Sec16B (Sec16b) from Rattus norvegicus (Rat).